The chain runs to 245 residues: MAGHSQYANIKHRKNAQDAKRARKFTKLRREILVAARSGLPDPEFNPRLRSALANARRFGLPKDKIESAIKSSTDKTEGDYQEVCYMAASSGGMWPSGFAVVVTALTDNKNRTASNVKHILSKSGLVLADVSFMFESFGVFSYPKSTDFDKLMEVALEASALDIKTEKNHFDVYCSRESFAATSLELRKKLGEYEHSGLVWRAKTHQEVPPEVHVRLEKLVDALEEDDDVQRVYTSILTERQSEK.

The segment at 1-22 is disordered; it reads MAGHSQYANIKHRKNAQDAKRA.

Belongs to the TACO1 family.

The protein resides in the cytoplasm. This is Probable transcriptional regulatory protein NSE_0641 from Neorickettsia sennetsu (strain ATCC VR-367 / Miyayama) (Ehrlichia sennetsu).